We begin with the raw amino-acid sequence, 58 residues long: Small ribosomal subunit protein bS21 (58 aa).

This sequence belongs to the bacterial ribosomal protein bS21 family.

This chain is Small ribosomal subunit protein bS21, found in Lacticaseibacillus paracasei (strain ATCC 334 / BCRC 17002 / CCUG 31169 / CIP 107868 / KCTC 3260 / NRRL B-441) (Lactobacillus paracasei).